Consider the following 150-residue polypeptide: D-aminoacyl-tRNA deacylase (150 aa).

The short motif at 136–137 (GP) is the Gly-cisPro motif, important for rejection of L-amino acids element.

The protein belongs to the DTD family. Homodimer.

It is found in the cytoplasm. The catalysed reaction is glycyl-tRNA(Ala) + H2O = tRNA(Ala) + glycine + H(+). It carries out the reaction a D-aminoacyl-tRNA + H2O = a tRNA + a D-alpha-amino acid + H(+). In terms of biological role, an aminoacyl-tRNA editing enzyme that deacylates mischarged D-aminoacyl-tRNAs. Also deacylates mischarged glycyl-tRNA(Ala), protecting cells against glycine mischarging by AlaRS. Acts via tRNA-based rather than protein-based catalysis; rejects L-amino acids rather than detecting D-amino acids in the active site. By recycling D-aminoacyl-tRNA to D-amino acids and free tRNA molecules, this enzyme counteracts the toxicity associated with the formation of D-aminoacyl-tRNA entities in vivo and helps enforce protein L-homochirality. The sequence is that of D-aminoacyl-tRNA deacylase from Macrococcus caseolyticus (strain JCSC5402) (Macrococcoides caseolyticum).